The primary structure comprises 176 residues: dCTP deaminase (176 aa).

Residues 99 to 104 and Asp115 contribute to the dCTP site; that span reads RSTLAR. Catalysis depends on Glu125, which acts as the Proton donor/acceptor. Residue Gln163 coordinates dCTP.

Belongs to the dCTP deaminase family. Homotrimer.

It catalyses the reaction dCTP + H2O + H(+) = dUTP + NH4(+). Its pathway is pyrimidine metabolism; dUMP biosynthesis; dUMP from dCTP (dUTP route): step 1/2. Functionally, catalyzes the deamination of dCTP to dUTP. This is dCTP deaminase from Pyrobaculum neutrophilum (strain DSM 2338 / JCM 9278 / NBRC 100436 / V24Sta) (Thermoproteus neutrophilus).